Here is a 217-residue protein sequence, read N- to C-terminus: Adenosylcobinamide-GDP ribazoletransferase (217 aa).

5 helical membrane passes run 6 to 26 (ALLSFFTIIPAGVAKLDFKCA), 39 to 61 (GPAAAALWLGASPHVAYLLLLLM), 95 to 115 (GTGGIFAVVATYAVATASTAS), 116 to 136 (PLQLLLAEVFSKALIVTVAAF), and 162 to 182 (ALAVIICLRPAATLAALAVAL).

This sequence belongs to the CobS family. Mg(2+) serves as cofactor.

Its subcellular location is the cell membrane. It carries out the reaction alpha-ribazole + adenosylcob(III)inamide-GDP = adenosylcob(III)alamin + GMP + H(+). It catalyses the reaction alpha-ribazole 5'-phosphate + adenosylcob(III)inamide-GDP = adenosylcob(III)alamin 5'-phosphate + GMP + H(+). It participates in cofactor biosynthesis; adenosylcobalamin biosynthesis; adenosylcobalamin from cob(II)yrinate a,c-diamide: step 7/7. Joins adenosylcobinamide-GDP and alpha-ribazole to generate adenosylcobalamin (Ado-cobalamin). Also synthesizes adenosylcobalamin 5'-phosphate from adenosylcobinamide-GDP and alpha-ribazole 5'-phosphate. The protein is Adenosylcobinamide-GDP ribazoletransferase of Pyrobaculum calidifontis (strain DSM 21063 / JCM 11548 / VA1).